The following is a 195-amino-acid chain: Interferon omega-1 (195 aa).

Positions methionine 1–serine 21 form a signal peptide, or 23 in some molecules. Intrachain disulfides connect cysteine 24-cysteine 122 and cysteine 52-cysteine 162. Residue asparagine 101 is glycosylated (N-linked (GlcNAc...) asparagine).

Belongs to the alpha/beta interferon family.

The protein localises to the secreted. The protein is Interferon omega-1 (IFNW1) of Homo sapiens (Human).